Here is a 1415-residue protein sequence, read N- to C-terminus: DNA-directed RNA polymerase subunit beta' (1415 aa).

C72, C74, C87, and C90 together coordinate Zn(2+). The Mg(2+) site is built by D463, D465, and D467. Residues C812, C886, C893, and C896 each contribute to the Zn(2+) site.

This sequence belongs to the RNA polymerase beta' chain family. In terms of assembly, the RNAP catalytic core consists of 2 alpha, 1 beta, 1 beta' and 1 omega subunit. When a sigma factor is associated with the core the holoenzyme is formed, which can initiate transcription. Mg(2+) is required as a cofactor. It depends on Zn(2+) as a cofactor.

It carries out the reaction RNA(n) + a ribonucleoside 5'-triphosphate = RNA(n+1) + diphosphate. In terms of biological role, DNA-dependent RNA polymerase catalyzes the transcription of DNA into RNA using the four ribonucleoside triphosphates as substrates. The chain is DNA-directed RNA polymerase subunit beta' from Dinoroseobacter shibae (strain DSM 16493 / NCIMB 14021 / DFL 12).